The chain runs to 132 residues: Fatty acid-binding protein, brain (132 aa).

V2 bears the N-acetylvaline mark. Position 127–129 (127–129) interacts with a fatty acid; that stretch reads RHY.

The protein belongs to the calycin superfamily. Fatty-acid binding protein (FABP) family. Expressed in brain and other neural tissues.

Its subcellular location is the cytoplasm. Functionally, B-FABP could be involved in the transport of a so far unknown hydrophobic ligand with potential morphogenic activity during CNS development. It is required for the establishment of the radial glial fiber system in developing brain, a system that is necessary for the migration of immature neurons to establish cortical layers. The protein is Fatty acid-binding protein, brain (FABP7) of Homo sapiens (Human).